The sequence spans 426 residues: UPF0597 protein CLI_1810 (426 aa).

The protein belongs to the UPF0597 family.

This chain is UPF0597 protein CLI_1810, found in Clostridium botulinum (strain Langeland / NCTC 10281 / Type F).